Here is a 180-residue protein sequence, read N- to C-terminus: dCTP deaminase, dUMP-forming (180 aa).

DCTP is bound by residues 100-105 (RSSLGR), Asp-117, 125-127 (TLE), Gln-146, Tyr-160, and Gln-167. Glu-127 serves as the catalytic Proton donor/acceptor.

The protein belongs to the dCTP deaminase family. As to quaternary structure, homotrimer.

The catalysed reaction is dCTP + 2 H2O = dUMP + NH4(+) + diphosphate. Its pathway is pyrimidine metabolism; dUMP biosynthesis; dUMP from dCTP: step 1/1. Functionally, bifunctional enzyme that catalyzes both the deamination of dCTP to dUTP and the hydrolysis of dUTP to dUMP without releasing the toxic dUTP intermediate. This chain is dCTP deaminase, dUMP-forming, found in Sulfurihydrogenibium sp. (strain YO3AOP1).